The primary structure comprises 478 residues: Alpha-1,3-mannosyl-glycoprotein 4-beta-N-acetylglucosaminyltransferase C (478 aa).

At 1-23 (MFKFHQVKHIFEILDKMRCLRKR) the chain is on the cytoplasmic side. Residues 24-44 (FTVSFLGVLVIFLLFMNLYIE) traverse the membrane as a helical; Signal-anchor for type II membrane protein segment. Residues 45-478 (DSYVLEGDKQ…IIRSISIWTS (434 aa)) lie on the Lumenal side of the membrane. Residues Asn-84, Asn-215, and Asn-348 are each glycosylated (N-linked (GlcNAc...) asparagine).

The protein belongs to the glycosyltransferase 54 family. The cofactor is a divalent metal cation.

It localises to the golgi apparatus membrane. The enzyme catalyses N(4)-{beta-D-GlcNAc-(1-&gt;2)-alpha-D-Man-(1-&gt;3)-[beta-D-GlcNAc-(1-&gt;2)-alpha-D-Man-(1-&gt;6)]-beta-D-Man-(1-&gt;4)-beta-D-GlcNAc-(1-&gt;4)-beta-D-GlcNAc}-L-asparaginyl-[protein] + UDP-N-acetyl-alpha-D-glucosamine = N(4)-{beta-D-GlcNAc-(1-&gt;2)-[beta-D-GlcNAc-(1-&gt;4)]-alpha-D-Man-(1-&gt;3)-[beta-D-GlcNAc-(1-&gt;2)-alpha-D-Man-(1-&gt;6)]-beta-D-Man-(1-&gt;4)-beta-D-GlcNAc-(1-&gt;4)-beta-D-GlcNAc}-L-asparaginyl-[protein] + UDP + H(+). It participates in protein modification; protein glycosylation. Functionally, glycosyltransferase that participates in the transfer of N-acetylglucosamine (GlcNAc) to the core mannose residues of N-linked glycans. Catalyzes the formation of the GlcNAcbeta1-4 branch on the GlcNAcbeta1-2Manalpha1-3 arm of the core structure of N-linked glycans. Essential for the production of tri- and tetra-antennary N-linked sugar chains. Does not catalyze the transfer of GlcNAc to the Manalpha1-6 arm to form GlcNAcBeta1-4Manalpha1-6 linkage ('GnT-VI' activity). The protein is Alpha-1,3-mannosyl-glycoprotein 4-beta-N-acetylglucosaminyltransferase C (MGAT4C) of Sus scrofa (Pig).